The chain runs to 103 residues: Large ribosomal subunit protein uL24 (103 aa).

This sequence belongs to the universal ribosomal protein uL24 family. As to quaternary structure, part of the 50S ribosomal subunit.

Functionally, one of two assembly initiator proteins, it binds directly to the 5'-end of the 23S rRNA, where it nucleates assembly of the 50S subunit. In terms of biological role, one of the proteins that surrounds the polypeptide exit tunnel on the outside of the subunit. The chain is Large ribosomal subunit protein uL24 from Rhizobium meliloti (strain 1021) (Ensifer meliloti).